Here is an 84-residue protein sequence, read N- to C-terminus: Large ribosomal subunit protein bL27 (84 aa).

Positions Met-1–Leu-21 are disordered.

It belongs to the bacterial ribosomal protein bL27 family.

The protein is Large ribosomal subunit protein bL27 of Pelodictyon phaeoclathratiforme (strain DSM 5477 / BU-1).